Here is a 543-residue protein sequence, read N- to C-terminus: Chaperonin GroEL 2 (543 aa).

Residues 29 to 32 (TLGP), 86 to 90 (DGTTT), Gly-413, 478 to 480 (NAA), and Asp-494 contribute to the ATP site.

Belongs to the chaperonin (HSP60) family. As to quaternary structure, forms a cylinder of 14 subunits composed of two heptameric rings stacked back-to-back. Interacts with the co-chaperonin GroES.

The protein localises to the cytoplasm. The enzyme catalyses ATP + H2O + a folded polypeptide = ADP + phosphate + an unfolded polypeptide.. In terms of biological role, together with its co-chaperonin GroES, plays an essential role in assisting protein folding. The GroEL-GroES system forms a nano-cage that allows encapsulation of the non-native substrate proteins and provides a physical environment optimized to promote and accelerate protein folding. The sequence is that of Chaperonin GroEL 2 from Thermosynechococcus vestitus (strain NIES-2133 / IAM M-273 / BP-1).